The following is a 387-amino-acid chain: MEQERIRQLAKLLAAGARARDAQAESMMDGGVAAAPAPAGQTLDVVEQALSTPPDDVDETQWRAAREQLLTHAHNGLVKLQRGDLQLDADEGCAMEAVIISDGSRPSFLLCDGEIDPKDPSIETWAGNIAAAQALGIAKLAAAVGRIQPKNGHASRYVGTGTLIDRDAGLILTNYHVIEQAQQNYGVAMTRNGDRLSVDGWLEIDFVGESCSLRTHRFRIVEVALPQGYGSTFHGIDAAVARIEPLPDSPALPDPVPLLSADAAYATGAISSLALIGFPARPSLQDGKDVDWSFVMRVLFGNRFGVKRLAPGQFTLPLGSHALDQGRRAIGHDATTFGGASGSLLMSWLDDRTPSFALHFGGATGVSNYALSFAAERNALSAIGARF.

This sequence belongs to the peptidase S1 family.

Functionally, possibly a dedicated protease for substrate gasdermin bGSDM; cleaves the bGSDM precursor, releasing the pore-forming moiety, which integrates into the membrane and triggers cell death. Involved in defense against bacteriophages. When this probable 4 gene operon (bGSDM-FE772_23060-FE772_23065-FE772_23070) is inserted into E.coli it provides nearly 100-fold protection against phages T5 and T6 and about 8-fold against phage T4. The operon without bGSDM no longer protects against phage. The protein is Probable serine protease FE772_23060 of Lysobacter enzymogenes.